The chain runs to 63 residues: Beta-defensin 4 (63 aa).

Positions 1–22 are cleaved as a signal peptide; it reads MRIHYLLFTFLLVLLSPLAAFT. The residue at position 23 (Q23) is a Pyrrolidone carboxylic acid. 3 disulfides stabilise this stretch: C31–C59, C38–C52, and C42–C60.

This sequence belongs to the beta-defensin family. Tongue, esophagus and trachea.

Its subcellular location is the secreted. Its function is as follows. Exhibits antimicrobial activity against Gram-negative bacteria and Gram-positive bacteria. May act as a ligand for C-C chemokine receptor CCR6. Can bind to mouse (but not human) CCR6 and induce chemotactic activity of CCR6-expressing cells. The protein is Beta-defensin 4 (Defb4) of Mus musculus (Mouse).